A 497-amino-acid polypeptide reads, in one-letter code: Delayed-rectifier potassium channel regulatory subunit KCNS1 (497 aa).

Residues 1–186 (MVSEFPGPGS…LTMENPGYSL (186 aa)) lie on the Cytoplasmic side of the membrane. The helical transmembrane segment at 187–208 (PSKLFSCVSIGVVLASIAAMCI) threads the bilayer. The Extracellular segment spans residues 209–239 (HSLPEYQAREAAAAVAAVAAGRSAEEVRDDP). A helical membrane pass occupies residues 240–262 (VLRRLEYFCIAWFSFEVSSRLLL). Residues 263-273 (APSTRNFFCHP) are Cytoplasmic-facing. A helical membrane pass occupies residues 274–291 (LNLIDIVSVLPFYLTLLA). Topologically, residues 292–309 (GAALGDQRGASGEELGDL) are extracellular. Residues 310–330 (GKVVQVFRLMRIFRVLKLARH) form a helical; Voltage-sensor membrane-spanning segment. The Cytoplasmic portion of the chain corresponds to 331 to 345 (STGLRSLGATLKHSY). Residues 346–367 (REVGILLLYLAVGVSVFSGVAY) traverse the membrane as a helical segment. The Extracellular portion of the chain corresponds to 368–379 (TAEEENEGFHTI). The helical intramembrane region spans 380–391 (PACWWWGTVSMT). The short motif at 392 to 397 (TVGYGD) is the Selectivity filter element. An intramembrane segment occupies 392–399 (TVGYGDVV). Residues 400–406 (PETVGGK) lie on the Extracellular side of the membrane. A helical transmembrane segment spans residues 407–435 (LAASGCILGGILVVALPITIIFNKFSHFY). The Cytoplasmic segment spans residues 436 to 497 (RRQKALEAAV…PREPAKSHSY (62 aa)). The disordered stretch occupies residues 464–497 (SDVSLETSRDTSQEGRSTDLETQAPREPAKSHSY). Residues 470-482 (TSRDTSQEGRSTD) show a composition bias toward basic and acidic residues.

It belongs to the potassium channel family. S (TC 1.A.1.2) subfamily. Kv9.1/KCNS1 sub-subfamily. As to quaternary structure, heterotetramer with KCNB1 and KCNB2. Does not form homomultimers. As to expression, detected in brain, but not in the other tissues tested. The highest levels of expression are in olfactory bulb, cerebral cortex, hippocampus, habenula, basolateral amygdaloid nuclei and cerebellum.

It localises to the cell membrane. In terms of biological role, potassium channel regulatory subunit that modulate the delayed rectifier voltage-gated potassium channel activity of KCNB1 and KCNB2 by altering their kinetics, expression levels, and shifting the half-inactivation potential to more polarized values. While it does not form functional channels on its own, it can form functional heterotetrameric channels with KCNB1 and KCNB2. Each regulatory subunit has unique regulatory properties that can lead to extensive inhibition, significant changes in kinetics, and/or substantial shifts in the voltage dependencies of the inactivation process. This is Delayed-rectifier potassium channel regulatory subunit KCNS1 from Mus musculus (Mouse).